The chain runs to 408 residues: NFATC2-interacting protein (408 aa).

A disordered region spans residues 1 to 113; the sequence is MAEPVGKRGR…LDPGEAPLVP (113 aa). Over residues 24–40 the composition is skewed to low complexity; it reads QRSPSRGTLDVVSVDLV. A phosphoserine mark is found at Ser41, Ser43, Ser73, Ser77, Ser79, Ser81, and Ser116. Glycyl lysine isopeptide (Lys-Gly) (interchain with G-Cter in SUMO2) cross-links involve residues Lys118 and Lys120. The interval 141-205 is disordered; the sequence is EEEVELADSS…TKSRKHTRAL (65 aa). The segment covering 169 to 181 has biased composition (basic and acidic residues); sequence RTKDKEEKKKTEI. Phosphoserine occurs at positions 187, 190, and 193. Basic residues predominate over residues 196-205; the sequence is TKSRKHTRAL. Residues 197–220 adopt a coiled-coil conformation; sequence KSRKHTRALKKLSEVNKRLQDLRS. Residues Ser209 and Ser303 each carry the phosphoserine modification. Phosphothreonine occurs at positions 305 and 307. The Ubiquitin-like domain occupies 337-408; sequence LQLRVQGKEK…ESGDLIEVWG (72 aa). Phosphoserine is present on residues Ser358 and Ser379.

In terms of assembly, interacts with NFATC2, TRAF1, TRAF2 and PRMT1. Interacts with UBE2I/UBC9. Post-translationally, methylation at the N-terminus by PRMT1 modulates interaction with the NFAT complex and results in augmented cytokine production.

It is found in the nucleus. It localises to the cytoplasm. Its function is as follows. In T-helper 2 (Th2) cells, regulates the magnitude of NFAT-driven transcription of a specific subset of cytokine genes, including IL3, IL4, IL5 and IL13, but not IL2. Recruits PRMT1 to the IL4 promoter; this leads to enhancement of histone H4 'Arg-3'-methylation and facilitates subsequent histone acetylation at the IL4 locus, thus promotes robust cytokine expression. Down-regulates formation of poly-SUMO chains by UBE2I/UBC9. The sequence is that of NFATC2-interacting protein (NFATC2IP) from Macaca fascicularis (Crab-eating macaque).